Consider the following 294-residue polypeptide: uncharacterized protein (294 aa).

Disordered stretches follow at residues 25–59 (VQVY…RVRR) and 77–141 (LKDD…FEAP). Residues 86-139 (YEELEDDDDDESIEEESDSEFEGESSSDEEESSYDSDSDYDSETEPEDSDDDFE) show a composition bias toward acidic residues. Residues 201–234 (IKFYKRNTTFTEEELAEIEEDLLAEVKARYNNMK) adopt a coiled-coil conformation. A compositionally biased stretch (basic and acidic residues) spans 242 to 259 (TIETTEDDKKAGEVNKYD). Positions 242–294 (TIETTEDDKKAGEVNKYDIDDDFIEKTESDEEEEITEDDSSEQETVVVEPVDE) are disordered. Over residues 260 to 283 (IDDDFIEKTESDEEEEITEDDSSE) the composition is skewed to acidic residues.

This is an uncharacterized protein from Magallana gigas (Pacific oyster).